A 439-amino-acid chain; its full sequence is Acyl-coenzyme A thioesterase 9, mitochondrial (439 aa).

The N-terminal 21 residues, Met-1 to Gly-21, are a transit peptide targeting the mitochondrion. HotDog ACOT-type domains follow at residues Lys-84–Glu-209 and Glu-289–Val-401. Lys-103 bears the N6-acetyllysine mark.

It belongs to the acyl coenzyme A hydrolase family. In terms of assembly, interacts with NYAP1, NYAP2 and MYO16.

Its subcellular location is the mitochondrion. It localises to the mitochondrion matrix. The protein localises to the mitochondrion inner membrane. The catalysed reaction is butanoyl-CoA + H2O = butanoate + CoA + H(+). The enzyme catalyses propanoyl-CoA + H2O = propanoate + CoA + H(+). It catalyses the reaction hexadecanoyl-CoA + H2O = hexadecanoate + CoA + H(+). It carries out the reaction octanoyl-CoA + H2O = octanoate + CoA + H(+). The catalysed reaction is decanoyl-CoA + H2O = decanoate + CoA + H(+). The enzyme catalyses tetradecanoyl-CoA + H2O = tetradecanoate + CoA + H(+). It catalyses the reaction 4,8-dimethylnonanoyl-CoA + H2O = 4,8-dimethylnonanoate + CoA + H(+). It carries out the reaction 3-methylbutanoyl-CoA + H2O = 3-methylbutanoate + CoA + H(+). The catalysed reaction is 2-methylpropanoyl-CoA + H2O = 2-methylpropanoate + CoA + H(+). It functions in the pathway lipid metabolism; fatty acid metabolism. Strongly inhibited by NADH and CoA. Mitochondrial acyl-CoA thioesterase. Catalyzes the hydrolysis of acyl-CoAs into free fatty acids and coenzyme A (CoA), regulating their respective intracellular levels. Regulates both mitochondrial lipid and amino acid metabolism. The polypeptide is Acyl-coenzyme A thioesterase 9, mitochondrial (Homo sapiens (Human)).